Reading from the N-terminus, the 511-residue chain is Maturase K (511 aa).

It belongs to the intron maturase 2 family. MatK subfamily.

The protein localises to the plastid. It is found in the chloroplast. Functionally, usually encoded in the trnK tRNA gene intron. Probably assists in splicing its own and other chloroplast group II introns. This chain is Maturase K, found in Nardus stricta (Mat-grass).